We begin with the raw amino-acid sequence, 430 residues long: Protein translocase subunit SecY (430 aa).

A run of 10 helical transmembrane segments spans residues 18–38 (VIFT…PVPG), 67–87 (FSIF…MQLL), 118–138 (IVLG…FFPG), 145–165 (VSVY…LMWL), 177–197 (GISI…LNLI), 213–233 (IVVI…VIFV), 270–290 (VIPV…AGLF), 309–329 (PIGM…YTFI), 369–389 (FVGS…IKFA), and 390–410 (DLPQ…GVAL).

Belongs to the SecY/SEC61-alpha family. As to quaternary structure, component of the Sec protein translocase complex. Heterotrimer consisting of SecY, SecE and SecG subunits. The heterotrimers can form oligomers, although 1 heterotrimer is thought to be able to translocate proteins. Interacts with the ribosome. Interacts with SecDF, and other proteins may be involved. Interacts with SecA.

It localises to the cell membrane. In terms of biological role, the central subunit of the protein translocation channel SecYEG. Consists of two halves formed by TMs 1-5 and 6-10. These two domains form a lateral gate at the front which open onto the bilayer between TMs 2 and 7, and are clamped together by SecE at the back. The channel is closed by both a pore ring composed of hydrophobic SecY resides and a short helix (helix 2A) on the extracellular side of the membrane which forms a plug. The plug probably moves laterally to allow the channel to open. The ring and the pore may move independently. This chain is Protein translocase subunit SecY, found in Halalkalibacterium halodurans (strain ATCC BAA-125 / DSM 18197 / FERM 7344 / JCM 9153 / C-125) (Bacillus halodurans).